Reading from the N-terminus, the 140-residue chain is Histone H2B (140 aa).

The interval 1 to 47 (MPPKAQKTPTTGGKAPAGKAPVEKKEAGKKTAAPSGEKKKRTKTRKE) is disordered. At K7 the chain carries N6-acetyllysine; alternate. K7 participates in a covalent cross-link: Glycyl lysine isopeptide (Lys-Gly) (interchain with G-Cter in SUMO); alternate. K14 is subject to N6-acetyllysine. Position 24 is an N6-acetyllysine; alternate (K24). K24 participates in a covalent cross-link: Glycyl lysine isopeptide (Lys-Gly) (interchain with G-Cter in SUMO); alternate. K25 participates in a covalent cross-link: Glycyl lysine isopeptide (Lys-Gly) (interchain with G-Cter in SUMO). K134 participates in a covalent cross-link: Glycyl lysine isopeptide (Lys-Gly) (interchain with G-Cter in ubiquitin).

This sequence belongs to the histone H2B family. In terms of assembly, the nucleosome is a histone octamer containing two molecules each of H2A, H2B, H3 and H4 assembled in one H3-H4 heterotetramer and two H2A-H2B heterodimers. The octamer wraps approximately 147 bp of DNA. Post-translationally, monoubiquitinated by BRE1 to form H2BK123ub1. H2BK123ub1 gives a specific tag for epigenetic transcriptional activation and is also prerequisite for H3K4me and H3K79me formation. H2BK123ub1 also modulates the formation of double-strand breaks during meiosis and is a prerequisite for DNA-damage checkpoint activation. Acetylated by GCN5 to form H2BK11ac and H2BK16ac. H2BK16ac can also be formed by ESA1. Acetylation of N-terminal lysines and particularly formation of H2BK11acK16ac has a positive effect on transcription. In terms of processing, sumoylation to form H2BK6su and probably also H2BK16su or H2BK17su, occurs preferentially near the telomeres and represses gene transcription.

The protein localises to the nucleus. It is found in the chromosome. Its function is as follows. Core component of nucleosome. Nucleosomes wrap and compact DNA into chromatin, limiting DNA accessibility to the cellular machineries which require DNA as a template. Histones thereby play a central role in transcription regulation, DNA repair, DNA replication and chromosomal stability. DNA accessibility is regulated via a complex set of post-translational modifications of histones, also called histone code, and nucleosome remodeling. The sequence is that of Histone H2B (HTB1) from Phaeosphaeria nodorum (strain SN15 / ATCC MYA-4574 / FGSC 10173) (Glume blotch fungus).